The chain runs to 355 residues: N6-Methyl-AMP deaminase (355 aa).

Residues histidine 24 and histidine 26 each coordinate Zn(2+). N(6)-methyl-AMP is bound by residues histidine 26, asparagine 28, histidine 74, 106-109 (STPR), aspartate 148, and glycine 181. Histidine 208 contributes to the Zn(2+) binding site. 3 residues coordinate N(6)-methyl-AMP: glutamate 211, aspartate 293, and aspartate 294. Glutamate 211 (proton donor) is an active-site residue. Aspartate 293 lines the Zn(2+) pocket.

It belongs to the metallo-dependent hydrolases superfamily. Adenosine and AMP deaminases family. As to quaternary structure, monomer. It depends on Zn(2+) as a cofactor.

It carries out the reaction N(6)-methyl-AMP + H2O + H(+) = IMP + methylamine. Functionally, catalyzes the hydrolysis of the free cytosolic methylated adenosine nucleotide N(6)-methyl-AMP (N6-mAMP) to produce inositol monophosphate (IMP) and methylamine. Is required for the catabolism of cytosolic N6-mAMP, which is derived from the degradation of mRNA containing N6-methylated adenine (m6A). Catalyzes the removal of different alkyl groups not only from N6-substituted purine or 2-aminopurine nucleoside monophosphates but also from O6-substituted compounds in vitro. The polypeptide is N6-Methyl-AMP deaminase (Homo sapiens (Human)).